Here is a 204-residue protein sequence, read N- to C-terminus: Probable GTP-binding protein EngB (204 aa).

Positions 1 to 21 are disordered; that stretch reads MKVSSAEFVTSGTRPAHYPPP. The region spanning 22-194 is the EngB-type G domain; the sequence is ELPEVAFAGR…WARIEVMLAA (173 aa). GTP-binding positions include 30 to 37, 57 to 61, 75 to 78, 142 to 145, and 173 to 175; these read GRSNVGKS, GRTQL, DLPG, TKCD, and FSA. The Mg(2+) site is built by Ser-37 and Thr-59.

It belongs to the TRAFAC class TrmE-Era-EngA-EngB-Septin-like GTPase superfamily. EngB GTPase family. Requires Mg(2+) as cofactor.

In terms of biological role, necessary for normal cell division and for the maintenance of normal septation. The protein is Probable GTP-binding protein EngB of Geobacter metallireducens (strain ATCC 53774 / DSM 7210 / GS-15).